The primary structure comprises 428 residues: CinA-like protein (428 aa).

The protein belongs to the CinA family.

The chain is CinA-like protein from Chlorobium phaeovibrioides (strain DSM 265 / 1930) (Prosthecochloris vibrioformis (strain DSM 265)).